The chain runs to 194 residues: FMN-dependent NADH:quinone oxidoreductase (194 aa).

FMN-binding positions include Ser9, 15–17, and 85–88; these read SIS and MYNF.

Belongs to the azoreductase type 1 family. In terms of assembly, homodimer. FMN is required as a cofactor.

The enzyme catalyses 2 a quinone + NADH + H(+) = 2 a 1,4-benzosemiquinone + NAD(+). It carries out the reaction N,N-dimethyl-1,4-phenylenediamine + anthranilate + 2 NAD(+) = 2-(4-dimethylaminophenyl)diazenylbenzoate + 2 NADH + 2 H(+). Its function is as follows. Quinone reductase that provides resistance to thiol-specific stress caused by electrophilic quinones. Functionally, also exhibits azoreductase activity. Catalyzes the reductive cleavage of the azo bond in aromatic azo compounds to the corresponding amines. This is FMN-dependent NADH:quinone oxidoreductase from Xanthomonas oryzae pv. oryzae (strain KACC10331 / KXO85).